The primary structure comprises 613 residues: Putative adenosylhomocysteinase 3 (613 aa).

Composition is skewed to low complexity over residues 1-14 (MSVQ…AAKV) and 35-44 (AAAVGAMVPP). Residues 1–186 (MSVQVVSAAA…KQQKNSKGSS (186 aa)) are disordered. At Ser2 the chain carries N-acetylserine. The segment at 2-111 (SVQVVSAAAA…DGGEALVSPD (110 aa)) is LISN domain, inhibits interaction with ITPR1. A compositionally biased stretch (pro residues) spans 52 to 68 (APAPAPAAERPPAPGPG). Residues 70–80 (GPTAALSPAAG) are compositionally biased toward low complexity. Position 109 is a phosphoserine (Ser109). The span at 137–146 (RPTKIGRRSL) shows a compositional bias: basic residues. Over residues 147–166 (SRSISQSSTDSYSSAASYTD) the composition is skewed to low complexity. Residues Ser151, Ser154, Ser157, and Ser160 each carry the phosphoserine modification. Substrate is bound by residues Thr238, Asp312, and Glu337. NAD(+) is bound at residue 338–340 (SVT). Lys367 and Asp371 together coordinate substrate. Residues Asn372, 403–408 (GEVGKG), Glu424, Asn459, 480–482 (MGH), and Asn527 each bind NAD(+).

It belongs to the adenosylhomocysteinase family. As to quaternary structure, homotetramer. Forms heteromultimers with AHCYL1 (via the C-terminal region). Interacts with ITPR1; with lower affinity than AHCYL1 and maybe via ITPR1. Interacts with SLC4A4. Interacts with ZCCHC4. NAD(+) serves as cofactor. Phosphorylated during neuronal differentiation at the LISN domain. Highly expressed in cerebrum, cerebellum and kidney. Also expressed in thymus, spleen, testis, ovary and, at lower, levels in lung and liver (at protein level). In cerebellum, expressed in interneurons.

It is found in the cytoplasm. The protein localises to the microsome. The enzyme catalyses S-adenosyl-L-homocysteine + H2O = L-homocysteine + adenosine. It functions in the pathway amino-acid biosynthesis; L-homocysteine biosynthesis; L-homocysteine from S-adenosyl-L-homocysteine: step 1/1. Functionally, may regulate the electrogenic sodium/bicarbonate cotransporter SLC4A4 activity and Mg(2+)-sensitivity. On the contrary of its homolog AHCYL1, does not regulate ITPR1 sensitivity to inositol 1,4,5-trisphosphate. The protein is Putative adenosylhomocysteinase 3 (Ahcyl2) of Mus musculus (Mouse).